The following is a 263-amino-acid chain: tRNA uridine(34) hydroxylase (263 aa).

Residues 129 to 223 (EGREIALLDT…YFEEVGGAHY (95 aa)) form the Rhodanese domain. C183 functions as the Cysteine persulfide intermediate in the catalytic mechanism.

This sequence belongs to the TrhO family.

The enzyme catalyses uridine(34) in tRNA + AH2 + O2 = 5-hydroxyuridine(34) in tRNA + A + H2O. In terms of biological role, catalyzes oxygen-dependent 5-hydroxyuridine (ho5U) modification at position 34 in tRNAs. The chain is tRNA uridine(34) hydroxylase from Variovorax paradoxus (strain S110).